Here is a 110-residue protein sequence, read N- to C-terminus: Large ribosomal subunit protein uL22 (110 aa).

It belongs to the universal ribosomal protein uL22 family. In terms of assembly, part of the 50S ribosomal subunit.

Functionally, this protein binds specifically to 23S rRNA; its binding is stimulated by other ribosomal proteins, e.g. L4, L17, and L20. It is important during the early stages of 50S assembly. It makes multiple contacts with different domains of the 23S rRNA in the assembled 50S subunit and ribosome. The globular domain of the protein is located near the polypeptide exit tunnel on the outside of the subunit, while an extended beta-hairpin is found that lines the wall of the exit tunnel in the center of the 70S ribosome. In Exiguobacterium sp. (strain ATCC BAA-1283 / AT1b), this protein is Large ribosomal subunit protein uL22.